The primary structure comprises 454 residues: UPF0210 protein Ppro_0613 (454 aa).

The protein belongs to the UPF0210 family. Homodimer.

In Pelobacter propionicus (strain DSM 2379 / NBRC 103807 / OttBd1), this protein is UPF0210 protein Ppro_0613.